The sequence spans 225 residues: E3 ubiquitin-protein ligase ATL76 (225 aa).

A helical membrane pass occupies residues 59 to 79; sequence LMLLSVLICGIICCLGLHYII. The RING-type; atypical zinc finger occupies 135–177; the sequence is CVICLSDFVSGEQLRLLPKCNHGFHVRCIDKWLQHHLTCPKCR.

The protein belongs to the RING-type zinc finger family. ATL subfamily.

It localises to the membrane. The catalysed reaction is S-ubiquitinyl-[E2 ubiquitin-conjugating enzyme]-L-cysteine + [acceptor protein]-L-lysine = [E2 ubiquitin-conjugating enzyme]-L-cysteine + N(6)-ubiquitinyl-[acceptor protein]-L-lysine.. It functions in the pathway protein modification; protein ubiquitination. E3 ubiquitin-protein ligase able to catalyze polyubiquitination with ubiquitin-conjugating enzyme E2 UBC8 in vitro. In Arabidopsis thaliana (Mouse-ear cress), this protein is E3 ubiquitin-protein ligase ATL76 (ATL76).